Here is a 323-residue protein sequence, read N- to C-terminus: Fructose-1,6-bisphosphatase class 1 (323 aa).

Positions 88, 107, 109, and 110 each coordinate Mg(2+). Residues 110–113 (DGSS) and asparagine 200 contribute to the substrate site. Glutamate 272 serves as a coordination point for Mg(2+).

Belongs to the FBPase class 1 family. Homotetramer. It depends on Mg(2+) as a cofactor.

It localises to the cytoplasm. It carries out the reaction beta-D-fructose 1,6-bisphosphate + H2O = beta-D-fructose 6-phosphate + phosphate. The protein operates within carbohydrate biosynthesis; gluconeogenesis. This chain is Fructose-1,6-bisphosphatase class 1, found in Acinetobacter baumannii (strain ATCC 17978 / DSM 105126 / CIP 53.77 / LMG 1025 / NCDC KC755 / 5377).